Consider the following 648-residue polypeptide: Phosphatidylinositol polyphosphate 5-phosphatase type IV (648 aa).

The disordered stretch occupies residues 1 to 64; that stretch reads MPSKSACLRH…PLSMPAKPSN (64 aa). A compositionally biased stretch (polar residues) spans 36–54; it reads TSASLPAADSQSSQTNSMP. 2 tandem repeats follow at residues 59–62 and 76–79. Positions 59–243 are 4 X 4 AA repeats of P-X-X-P; the sequence is PAKPSNQNLQ…AHSNLGPSRP (185 aa). The disordered stretch occupies residues 99–158; it reads RFRGSQEDLTVQNGASPCRGSLQDSVAQSPAYSRPLPCLSTSLQEIPKPRRATGSEGGSP. At serine 103 the chain carries Phosphoserine. Positions 120 to 129 are enriched in polar residues; it reads LQDSVAQSPA. Repeat 3 spans residues 147-150; it reads PRRA. Position 197 is a phosphothreonine (threonine 197). The stretch at 240-243 is repeat 4; sequence PSRP. Serine 245 and serine 260 each carry phosphoserine. The residue at position 645 (cysteine 645) is a Cysteine methyl ester. Cysteine 645 is lipidated: S-farnesyl cysteine. Residues 646–648 constitute a propeptide, removed in mature form; it reads TVS.

Belongs to the inositol 1,4,5-trisphosphate 5-phosphatase type IV family. Interacts (when prenylated) with PDE6D; this is important for normal location in cilia.

Its subcellular location is the cytoplasm. It localises to the cytoskeleton. The protein resides in the cilium axoneme. It is found in the golgi apparatus. The protein localises to the golgi stack membrane. Its subcellular location is the cell membrane. It localises to the cell projection. The protein resides in the ruffle. It is found in the nucleus. It carries out the reaction a 1,2-diacyl-sn-glycero-3-phospho-(1D-myo-inositol-4,5-bisphosphate) + H2O = a 1,2-diacyl-sn-glycero-3-phospho-(1D-myo-inositol 4-phosphate) + phosphate. It catalyses the reaction a 1,2-diacyl-sn-glycero-3-phospho-(1D-myo-inositol-3,4,5-trisphosphate) + H2O = a 1,2-diacyl-sn-glycero-3-phospho-(1D-myo-inositol-3,4-bisphosphate) + phosphate. The enzyme catalyses a 1,2-diacyl-sn-glycero-3-phospho-(1D-myo-inositol-3,5-bisphosphate) + H2O = a 1,2-diacyl-sn-glycero-3-phospho-(1D-myo-inositol-3-phosphate) + phosphate. Its function is as follows. Phosphatidylinositol (PtdIns) phosphatase that specifically hydrolyzes the 5-phosphate of phosphatidylinositol-3,4,5-trisphosphate (PtdIns(3,4,5)P3), phosphatidylinositol 4,5-bisphosphate PtdIns (4,5)P2 and phosphatidylinositol 3,5-bisphosphate (PtdIns(3,5)P2). Specific for lipid substrates, inactive towards water soluble inositol phosphates. Plays an essential role in the primary cilium by controlling ciliary growth and phosphoinositide 3-kinase (PI3K) signaling and stability. This is Phosphatidylinositol polyphosphate 5-phosphatase type IV (Inpp5e) from Rattus norvegicus (Rat).